A 257-amino-acid polypeptide reads, in one-letter code: NAD-capped RNA hydrolase NudC (257 aa).

Substrate contacts are provided by Lys-25 and Arg-69. Zn(2+) contacts are provided by Cys-98 and Cys-101. Glu-111 contacts substrate. Zn(2+) is bound by residues Cys-116 and Cys-119. Tyr-124 serves as a coordination point for substrate. One can recognise a Nudix hydrolase domain in the interval 125–248; that stretch reads PQIAPCIIVA…TVARRLIEDT (124 aa). Ala-158, Glu-174, and Glu-178 together coordinate a divalent metal cation. The Nudix box motif lies at 159 to 180; it reads GFVEVGETLEQAVAREVMEESG. 192–199 contacts substrate; sequence QPWPFPQS. Position 219 (Glu-219) interacts with a divalent metal cation. Residue Ala-241 coordinates substrate.

Belongs to the Nudix hydrolase family. NudC subfamily. As to quaternary structure, homodimer. Mg(2+) serves as cofactor. Mn(2+) is required as a cofactor. It depends on Zn(2+) as a cofactor.

The catalysed reaction is a 5'-end NAD(+)-phospho-ribonucleoside in mRNA + H2O = a 5'-end phospho-adenosine-phospho-ribonucleoside in mRNA + beta-nicotinamide D-ribonucleotide + 2 H(+). It catalyses the reaction NAD(+) + H2O = beta-nicotinamide D-ribonucleotide + AMP + 2 H(+). The enzyme catalyses NADH + H2O = reduced beta-nicotinamide D-ribonucleotide + AMP + 2 H(+). Its function is as follows. mRNA decapping enzyme that specifically removes the nicotinamide adenine dinucleotide (NAD) cap from a subset of mRNAs by hydrolyzing the diphosphate linkage to produce nicotinamide mononucleotide (NMN) and 5' monophosphate mRNA. The NAD-cap is present at the 5'-end of some mRNAs and stabilizes RNA against 5'-processing. Has preference for mRNAs with a 5'-end purine. Catalyzes the hydrolysis of a broad range of dinucleotide pyrophosphates. The chain is NAD-capped RNA hydrolase NudC from Escherichia fergusonii (strain ATCC 35469 / DSM 13698 / CCUG 18766 / IAM 14443 / JCM 21226 / LMG 7866 / NBRC 102419 / NCTC 12128 / CDC 0568-73).